The sequence spans 439 residues: Methylenetetrahydrofolate--tRNA-(uracil-5-)-methyltransferase TrmFO (439 aa).

9-14 provides a ligand contact to FAD; the sequence is GAGLAG.

It belongs to the MnmG family. TrmFO subfamily. Requires FAD as cofactor.

The protein localises to the cytoplasm. It catalyses the reaction uridine(54) in tRNA + (6R)-5,10-methylene-5,6,7,8-tetrahydrofolate + NADH + H(+) = 5-methyluridine(54) in tRNA + (6S)-5,6,7,8-tetrahydrofolate + NAD(+). The catalysed reaction is uridine(54) in tRNA + (6R)-5,10-methylene-5,6,7,8-tetrahydrofolate + NADPH + H(+) = 5-methyluridine(54) in tRNA + (6S)-5,6,7,8-tetrahydrofolate + NADP(+). Its function is as follows. Catalyzes the folate-dependent formation of 5-methyl-uridine at position 54 (M-5-U54) in all tRNAs. The chain is Methylenetetrahydrofolate--tRNA-(uracil-5-)-methyltransferase TrmFO from Lactobacillus delbrueckii subsp. bulgaricus (strain ATCC BAA-365 / Lb-18).